A 194-amino-acid chain; its full sequence is Peptidyl-tRNA hydrolase (194 aa).

Residue Tyr-16 coordinates tRNA. Catalysis depends on His-21, which acts as the Proton acceptor. TRNA-binding residues include Phe-67, Asn-69, and Asn-115.

It belongs to the PTH family. Monomer.

Its subcellular location is the cytoplasm. The catalysed reaction is an N-acyl-L-alpha-aminoacyl-tRNA + H2O = an N-acyl-L-amino acid + a tRNA + H(+). In terms of biological role, hydrolyzes ribosome-free peptidyl-tRNAs (with 1 or more amino acids incorporated), which drop off the ribosome during protein synthesis, or as a result of ribosome stalling. Functionally, catalyzes the release of premature peptidyl moieties from peptidyl-tRNA molecules trapped in stalled 50S ribosomal subunits, and thus maintains levels of free tRNAs and 50S ribosomes. The protein is Peptidyl-tRNA hydrolase of Escherichia coli O81 (strain ED1a).